The primary structure comprises 612 residues: Glutamine--fructose-6-phosphate aminotransferase [isomerizing] (612 aa).

Cys-2 serves as the catalytic Nucleophile; for GATase activity. The region spanning 2–220 (CGIVGAIRAH…DGDIALLASD (219 aa)) is the Glutamine amidotransferase type-2 domain. 2 SIS domains span residues 288–428 (AKSV…VRGL) and 461–602 (WAQQ…VDKP). The active-site For Fru-6P isomerization activity is Lys-607.

In terms of assembly, homodimer.

It is found in the cytoplasm. The catalysed reaction is D-fructose 6-phosphate + L-glutamine = D-glucosamine 6-phosphate + L-glutamate. Its function is as follows. Catalyzes the first step in hexosamine metabolism, converting fructose-6P into glucosamine-6P using glutamine as a nitrogen source. The protein is Glutamine--fructose-6-phosphate aminotransferase [isomerizing] of Neisseria meningitidis serogroup A / serotype 4A (strain DSM 15465 / Z2491).